A 260-amino-acid polypeptide reads, in one-letter code: Ribonuclease HII (260 aa).

The 189-residue stretch at 71-259 (RRIAGIDEAG…VREVLKASEQ (189 aa)) folds into the RNase H type-2 domain. Positions 77, 78, and 169 each coordinate a divalent metal cation.

It belongs to the RNase HII family. It depends on Mn(2+) as a cofactor. The cofactor is Mg(2+).

Its subcellular location is the cytoplasm. The enzyme catalyses Endonucleolytic cleavage to 5'-phosphomonoester.. In terms of biological role, endonuclease that specifically degrades the RNA of RNA-DNA hybrids. The sequence is that of Ribonuclease HII from Geobacillus kaustophilus (strain HTA426).